The primary structure comprises 98 residues: Large ribosomal subunit protein uL23 (98 aa).

The protein belongs to the universal ribosomal protein uL23 family. As to quaternary structure, part of the 50S ribosomal subunit. Contacts protein L29, and trigger factor when it is bound to the ribosome.

In terms of biological role, one of the early assembly proteins it binds 23S rRNA. One of the proteins that surrounds the polypeptide exit tunnel on the outside of the ribosome. Forms the main docking site for trigger factor binding to the ribosome. The chain is Large ribosomal subunit protein uL23 from Limosilactobacillus reuteri (strain DSM 20016) (Lactobacillus reuteri).